The chain runs to 386 residues: Putative gustatory receptor 22b (386 aa).

Over 1-48 the chain is Cytoplasmic; that stretch reads MFGSSREIRPYLARQMLKTTLYGSWLLGIFPFTLDSGKRIRQLRRSRC. Residues 49 to 69 traverse the membrane as a helical segment; the sequence is LTLYGLVLNYFLIFTLIRLAF. Topologically, residues 70-89 are extracellular; sequence EYRKHKLEAFKRNPVLEMIN. The helical transmembrane segment at 90-110 threads the bilayer; it reads VVIGIINVLSALIVHFMNFWG. Residues 111-155 are Cytoplasmic-facing; sequence SRKVGEICNELLILEYQDFEGLNGRNCPNFNCFVIQKCLTILGQL. The chain crosses the membrane as a helical span at residues 156–176; that stretch reads LSFFTLNFALPGLEFHICLVL. The Extracellular portion of the chain corresponds to 177-178; the sequence is LS. A helical transmembrane segment spans residues 179 to 199; sequence CLMEFSLNLNIMHYHVGVLLI. Residues 200–254 are Cytoplasmic-facing; the sequence is YRYVWLINEQLKDLVSQLKLNPETDFSRIHQFLSLYKRLLELNRKLVIAYEYQMT. The helical transmembrane segment at 255–275 threads the bilayer; it reads LFIIAQLSGNIVVIYFLIVYG. At 276 to 282 the chain is on the extracellular side; that stretch reads LSMRTYS. The helical transmembrane segment at 283–303 threads the bilayer; sequence IFLVAFPNSLLINIWDFWLCI. Over 304 to 363 the chain is Cytoplasmic; that stretch reads AACDLTEKAGDETAIILKIFSDLEHRDDKLEMSVNEFAWLCSHRKFRFQLCGLFSMNCRM. The helical transmembrane segment at 364–384 threads the bilayer; sequence GFKMIITTFLYLVYLVQFDYM. Residues 385-386 lie on the Extracellular side of the membrane; sequence NL.

It belongs to the insect chemoreceptor superfamily. Gustatory receptor (GR) family. Gr22e subfamily. Expressed in taste bristles in the foreleg and labial palps. In larvae, is expressed in neurons of the dorsal and posterior pharyngeal sense organs. Expressed in taste neurons that mediate sensitivity to bitter compounds.

Its subcellular location is the cell membrane. Functionally, probable gustatory receptor which mediates acceptance or avoidance behavior, depending on its substrates. Seems to be involved in the sensing of bitter taste since it is expressed in neurons that mediate sensitivity to bitter compounds. The polypeptide is Putative gustatory receptor 22b (Drosophila melanogaster (Fruit fly)).